A 346-amino-acid polypeptide reads, in one-letter code: uncharacterized protein (346 aa).

This is an uncharacterized protein from Mycoplasma genitalium (strain ATCC 33530 / DSM 19775 / NCTC 10195 / G37) (Mycoplasmoides genitalium).